Consider the following 330-residue polypeptide: Fructose-1,6-bisphosphatase class 1 (330 aa).

Mg(2+) is bound by residues E84, D103, L105, and D106. Residues 106 to 109 (DGSS), N196, and K262 each bind substrate. A Mg(2+)-binding site is contributed by E268.

The protein belongs to the FBPase class 1 family. As to quaternary structure, homotetramer. The cofactor is Mg(2+).

The protein resides in the cytoplasm. It catalyses the reaction beta-D-fructose 1,6-bisphosphate + H2O = beta-D-fructose 6-phosphate + phosphate. The protein operates within carbohydrate biosynthesis; gluconeogenesis. The sequence is that of Fructose-1,6-bisphosphatase class 1 from Shewanella sp. (strain W3-18-1).